The chain runs to 388 residues: LL-diaminopimelate aminotransferase (388 aa).

Tyr13, Gly38, Lys102, Tyr126, and Asn176 together coordinate substrate. Pyridoxal 5'-phosphate is bound by residues 101-102 (SK), Tyr126, Asn176, Tyr207, and 235-237 (SLS). An N6-(pyridoxal phosphate)lysine modification is found at Lys238. Position 246 (Arg246) interacts with pyridoxal 5'-phosphate. A substrate-binding site is contributed by Arg364.

Belongs to the class-I pyridoxal-phosphate-dependent aminotransferase family. LL-diaminopimelate aminotransferase subfamily. Homodimer. It depends on pyridoxal 5'-phosphate as a cofactor.

It catalyses the reaction (2S,6S)-2,6-diaminopimelate + 2-oxoglutarate = (S)-2,3,4,5-tetrahydrodipicolinate + L-glutamate + H2O + H(+). The protein operates within amino-acid biosynthesis; L-lysine biosynthesis via DAP pathway; LL-2,6-diaminopimelate from (S)-tetrahydrodipicolinate (aminotransferase route): step 1/1. Its function is as follows. Involved in the synthesis of meso-diaminopimelate (m-DAP or DL-DAP), required for both lysine and peptidoglycan biosynthesis. Catalyzes the direct conversion of tetrahydrodipicolinate to LL-diaminopimelate. In Dehalococcoides mccartyi (strain ATCC BAA-2266 / KCTC 15142 / 195) (Dehalococcoides ethenogenes (strain 195)), this protein is LL-diaminopimelate aminotransferase.